An 894-amino-acid chain; its full sequence is Exocyst complex component 2 (894 aa).

In terms of domain architecture, IPT/TIG spans 5–89 (PVVTGLSPKE…GTSTVQFRAY (85 aa)). Residues 398–413 (HTSKDSGAQEKAKNRD) are compositionally biased toward basic and acidic residues. The disordered stretch occupies residues 398–417 (HTSKDSGAQEKAKNRDSSQA).

This sequence belongs to the SEC5 family. The exocyst complex is composed of Sec3/Exoc1, Sec5/Exoc2, Sec6/Exoc3, Sec8/Exoc4, Sec10/Exoc5, Sec15/Exoc6, Exo70/Exoc7 and Exo84/Exoc8.

In terms of biological role, component of the exocyst complex involved in the docking of exocytic vesicles with fusion sites on the plasma membrane. The protein is Exocyst complex component 2 of Drosophila melanogaster (Fruit fly).